The chain runs to 122 residues: Immunoglobulin lambda variable 8-61 (122 aa).

Positions 1–24 (MSVPTMAWMMLLLGLLAYGSGVDS) are cleaved as a signal peptide. The segment at 25 to 49 (QTVVTQEPSFSVSPGGTVTLTCGLS) is framework-1. One can recognise an Ig-like domain in the interval 25–122 (QTVVTQEPSF…YCVLYMGSGI (98 aa)). A disulfide bridge connects residues Cys46 and Cys114. The interval 50–58 (SGSVSTSYY) is complementarity-determining-1. Residues 59-75 (PSWYQQTPGQAPRTLIY) are framework-2. Positions 76–78 (STN) are complementarity-determining-2. The interval 79–114 (TRSSGVPDRFSGSILGNKAALTITGAQADDESDYYC) is framework-3. The segment at 115–122 (VLYMGSGI) is complementarity-determining-3.

As to quaternary structure, immunoglobulins are composed of two identical heavy chains and two identical light chains; disulfide-linked.

The protein localises to the secreted. It is found in the cell membrane. V region of the variable domain of immunoglobulin light chains that participates in the antigen recognition. Immunoglobulins, also known as antibodies, are membrane-bound or secreted glycoproteins produced by B lymphocytes. In the recognition phase of humoral immunity, the membrane-bound immunoglobulins serve as receptors which, upon binding of a specific antigen, trigger the clonal expansion and differentiation of B lymphocytes into immunoglobulins-secreting plasma cells. Secreted immunoglobulins mediate the effector phase of humoral immunity, which results in the elimination of bound antigens. The antigen binding site is formed by the variable domain of one heavy chain, together with that of its associated light chain. Thus, each immunoglobulin has two antigen binding sites with remarkable affinity for a particular antigen. The variable domains are assembled by a process called V-(D)-J rearrangement and can then be subjected to somatic hypermutations which, after exposure to antigen and selection, allow affinity maturation for a particular antigen. The polypeptide is Immunoglobulin lambda variable 8-61 (Homo sapiens (Human)).